The following is a 537-amino-acid chain: NAD(P)H-quinone oxidoreductase chain 4 3 (537 aa).

The next 13 helical transmembrane spans lie at phenylalanine 6–isoleucine 26, tryptophan 36–tyrosine 56, leucine 87–tryptophan 107, leucine 115–aspartate 135, leucine 136–isoleucine 156, phenylalanine 169–phenylalanine 189, alanine 209–phenylalanine 229, serine 243–isoleucine 263, phenylalanine 277–phenylalanine 297, methionine 314–leucine 334, glutamine 335–glutamate 355, leucine 387–threonine 407, and valine 417–leucine 437.

This sequence belongs to the complex I subunit 4 family.

The protein localises to the cellular thylakoid membrane. The catalysed reaction is a plastoquinone + NADH + (n+1) H(+)(in) = a plastoquinol + NAD(+) + n H(+)(out). The enzyme catalyses a plastoquinone + NADPH + (n+1) H(+)(in) = a plastoquinol + NADP(+) + n H(+)(out). In terms of biological role, NDH-1 shuttles electrons from NAD(P)H, via FMN and iron-sulfur (Fe-S) centers, to quinones in the respiratory chain. The immediate electron acceptor for the enzyme in this species is believed to be plastoquinone. Couples the redox reaction to proton translocation (for every two electrons transferred, four hydrogen ions are translocated across the cytoplasmic membrane), and thus conserves the redox energy in a proton gradient. The chain is NAD(P)H-quinone oxidoreductase chain 4 3 from Trichormus variabilis (strain ATCC 29413 / PCC 7937) (Anabaena variabilis).